A 513-amino-acid chain; its full sequence is Xylose import ATP-binding protein XylG (513 aa).

2 ABC transporter domains span residues 5–242 (LEMK…VGRE) and 259–505 (LRIE…LRSE). Position 37 to 44 (37 to 44 (GENGSGKS)) interacts with ATP.

This sequence belongs to the ABC transporter superfamily. Xylose importer (TC 3.A.1.2.4) family. The complex is composed of two ATP-binding proteins (XylG), two transmembrane proteins (XylH) and a solute-binding protein (XylF).

The protein localises to the cell inner membrane. The enzyme catalyses D-xylose(out) + ATP + H2O = D-xylose(in) + ADP + phosphate + H(+). In terms of biological role, part of the ABC transporter complex XylFGH involved in xylose import. Responsible for energy coupling to the transport system. This Shigella flexneri serotype 5b (strain 8401) protein is Xylose import ATP-binding protein XylG.